A 405-amino-acid chain; its full sequence is Phosphopentomutase (405 aa).

6 residues coordinate Mn(2+): Asp10, Asp303, His308, Asp344, His345, and His356.

This sequence belongs to the phosphopentomutase family. It depends on Mn(2+) as a cofactor.

Its subcellular location is the cytoplasm. The enzyme catalyses 2-deoxy-alpha-D-ribose 1-phosphate = 2-deoxy-D-ribose 5-phosphate. The catalysed reaction is alpha-D-ribose 1-phosphate = D-ribose 5-phosphate. It functions in the pathway carbohydrate degradation; 2-deoxy-D-ribose 1-phosphate degradation; D-glyceraldehyde 3-phosphate and acetaldehyde from 2-deoxy-alpha-D-ribose 1-phosphate: step 1/2. In terms of biological role, isomerase that catalyzes the conversion of deoxy-ribose 1-phosphate (dRib-1-P) and ribose 1-phosphate (Rib-1-P) to deoxy-ribose 5-phosphate (dRib-5-P) and ribose 5-phosphate (Rib-5-P), respectively. This Shewanella loihica (strain ATCC BAA-1088 / PV-4) protein is Phosphopentomutase.